A 222-amino-acid polypeptide reads, in one-letter code: uncharacterized protein (222 aa).

This is an uncharacterized protein from Acanthamoeba polyphaga mimivirus (APMV).